A 61-amino-acid polypeptide reads, in one-letter code: Large ribosomal subunit protein uL30 (61 aa).

It belongs to the universal ribosomal protein uL30 family. As to quaternary structure, part of the 50S ribosomal subunit.

This Corynebacterium glutamicum (strain ATCC 13032 / DSM 20300 / JCM 1318 / BCRC 11384 / CCUG 27702 / LMG 3730 / NBRC 12168 / NCIMB 10025 / NRRL B-2784 / 534) protein is Large ribosomal subunit protein uL30.